The primary structure comprises 92 residues: RNA-binding protein Hfq (92 aa).

The Sm domain maps to 9–68; that stretch reads DPFLNALRRERVPVSIYLVNGIKLQGQVESFDQFVILLKNTVSQMVYKHAISTVVPARPF. Residues 68-92 form a disordered region; that stretch reads FNVSSHHNTPNQAAGYNASHDDSAE. Polar residues predominate over residues 69–81; the sequence is NVSSHHNTPNQAA.

This sequence belongs to the Hfq family. Homohexamer.

RNA chaperone that binds small regulatory RNA (sRNAs) and mRNAs to facilitate mRNA translational regulation in response to envelope stress, environmental stress and changes in metabolite concentrations. Also binds with high specificity to tRNAs. This is RNA-binding protein Hfq from Shewanella loihica (strain ATCC BAA-1088 / PV-4).